A 396-amino-acid chain; its full sequence is S-adenosylmethionine synthase (396 aa).

ATP is bound at residue His15. Asp17 provides a ligand contact to Mg(2+). Glu43 is a binding site for K(+). L-methionine-binding residues include Glu56 and Gln99. Residues 99–109 (QSSDIAMGVDK) form a flexible loop region. ATP is bound by residues 175–177 (DGK), 241–242 (RF), Asp250, 256–257 (RK), Ala273, and Lys277. An L-methionine-binding site is contributed by Asp250. Position 281 (Lys281) interacts with L-methionine.

This sequence belongs to the AdoMet synthase family. As to quaternary structure, homotetramer; dimer of dimers. It depends on Mg(2+) as a cofactor. Requires K(+) as cofactor.

It is found in the cytoplasm. The enzyme catalyses L-methionine + ATP + H2O = S-adenosyl-L-methionine + phosphate + diphosphate. It functions in the pathway amino-acid biosynthesis; S-adenosyl-L-methionine biosynthesis; S-adenosyl-L-methionine from L-methionine: step 1/1. Catalyzes the formation of S-adenosylmethionine (AdoMet) from methionine and ATP. The overall synthetic reaction is composed of two sequential steps, AdoMet formation and the subsequent tripolyphosphate hydrolysis which occurs prior to release of AdoMet from the enzyme. This is S-adenosylmethionine synthase from Ruminiclostridium cellulolyticum (strain ATCC 35319 / DSM 5812 / JCM 6584 / H10) (Clostridium cellulolyticum).